Reading from the N-terminus, the 32-residue chain is Photosystem I reaction center subunit XII (32 aa).

Residues 10–27 form a helical membrane-spanning segment; sequence VVALVSAFVTGILALRLG.

This sequence belongs to the PsaM family.

The protein resides in the plastid. It is found in the chloroplast thylakoid membrane. In Staurastrum punctulatum (Green alga), this protein is Photosystem I reaction center subunit XII.